Here is a 381-residue protein sequence, read N- to C-terminus: tRNA (guanine(6)-N2)-methyltransferase (381 aa).

The region spanning 43 to 157 (KLIPKINYLS…FDELIVGIDT (115 aa)) is the THUMP domain. S-adenosyl-L-methionine-binding positions include 173-177 (HPAHL), 204-206 (SGT), Asp261, 289-290 (DA), and Asn306.

Belongs to the methyltransferase superfamily.

Its subcellular location is the cytoplasm. It catalyses the reaction guanosine(6) in tRNA + S-adenosyl-L-methionine = N(2)-methylguanosine(6) in tRNA + S-adenosyl-L-homocysteine + H(+). Its function is as follows. S-adenosyl-L-methionine-dependent methyltransferase that catalyzes the methylation of the guanosine nucleotide at position 6 (m2G6) in tRNA(Cys). This Methanocaldococcus jannaschii (strain ATCC 43067 / DSM 2661 / JAL-1 / JCM 10045 / NBRC 100440) (Methanococcus jannaschii) protein is tRNA (guanine(6)-N2)-methyltransferase.